Reading from the N-terminus, the 182-residue chain is MSGGNLQHLYFNKIRVELQKQFEYTNVHQIPKLTKITLNRGLGTLYQQSPKVFESSVSDLMLITGQKPRFNKSKKSIAGFKLREGTVVGLSVTLRRKKMYAFLEKLIHFSLPAARDFRGLSTKNFDGLGNYNLGIKEHAIFPEIDFDKIDHSYGLNICIVTTANNDIEGKALLKFLGMPFKD.

Belongs to the universal ribosomal protein uL5 family. As to quaternary structure, part of the 50S ribosomal subunit; contacts the 5S rRNA.

It localises to the plastid. Its subcellular location is the chloroplast. In terms of biological role, binds 5S rRNA, forms part of the central protuberance of the 50S subunit. The protein is Large ribosomal subunit protein uL5c (rpl5) of Cyanidium caldarium (Red alga).